Reading from the N-terminus, the 505-residue chain is MSQQDKKLTGVFGHPVSDRENSMTAGPRGPLLMQDIYFLEQMSQFDREVIPERRMHAKGSGAFGTFTVTKDITKYTNAKIFSEIGKQTEMFARFSTVAGERGAADAERDIRGFALKFYTEEGNWDLVGNNTPVFFFRDPKLFVSLNRAVKRDPRTNMRDAQNNWDFWTGLPEALHQVTILMSDRGIPKDLRHMHGFGSHTYSMYNDSGERVWVKFHFRTQQGIENLTDEEAAEIIATDRDSSQRDLFEAIEKGDYPKWTMYIQVMTEEQAKNHKDNPFDLTKVWYHDEYPLIEVGEFELNRNPDNYFMDVEQAAFAPTNIIPGLDFSPDKMLQGRLFSYGDAQRYRLGVNHWQIPVNQPKGVGIENICPFSRDGQMRVVDNNQGGGTHYYPNNHGKFDSQPEYKKPPFPTDGYGYEYNQRQDDDNYFEQPGKLFRLQSEDAKERIFTNTANAMEGVTDDVKRRHIRHCYKADPEYGKGVAKALGIDINSIDLETENDETYENFEK.

Residues 1 to 25 (MSQQDKKLTGVFGHPVSDRENSMTA) are disordered. Catalysis depends on residues histidine 56 and asparagine 129. Tyrosine 339 contacts heme.

It belongs to the catalase family. Homodimer. It depends on heme as a cofactor.

The catalysed reaction is 2 H2O2 = O2 + 2 H2O. In terms of biological role, decomposes hydrogen peroxide into water and oxygen; serves to protect cells from the toxic effects of hydrogen peroxide. This chain is Catalase (katA), found in Staphylococcus aureus (strain MSSA476).